The following is a 626-amino-acid chain: ABC transporter G family member 8 (626 aa).

One can recognise an ABC transporter domain in the interval 56–300 (VNLDNKTENS…SLGYPCPNNT (245 aa)). 90-97 (GPSGSGKS) is an ATP binding site. Residues 373-621 (GNALSRVITA…SLSYFALHFL (249 aa)) enclose the ABC transmembrane type-2 domain. Helical transmembrane passes span 376–396 (LSRV…FAGL), 409–429 (TLFF…TLFL), 447–467 (FPYF…VTLV), 485–505 (FFFA…FISS), 515–535 (LTFS…GFYV), 543–563 (AFGW…VVIN), and 600–620 (FGVL…ALHF).

It belongs to the ABC transporter superfamily. ABCG family. Eye pigment precursor importer (TC 3.A.1.204) subfamily.

The protein localises to the membrane. In Dictyostelium discoideum (Social amoeba), this protein is ABC transporter G family member 8 (abcG8).